The primary structure comprises 74 residues: Antimicrobial peptide AcrAP1 (74 aa).

Residues 1–22 (MEIKYLLTVFLVLLIVSDHCQA) form the signal peptide. Lys40 carries the post-translational modification Lysine amide. Positions 46–74 (DLDGQIDRFRNFRKRDAELEELLSKLPIY) are excised as a propeptide.

It belongs to the non-disulfide-bridged peptide (NDBP) superfamily. Short antimicrobial peptide (group 4) family. In terms of tissue distribution, expressed by the venom gland.

Its subcellular location is the secreted. The protein resides in the target cell membrane. Has antimicrobial activity against the Gram-positive bacteria S.aureus (MIC=8 uM) and the yeast C.albicans (MIC=16 uM). Causes hemolysis on horse erythrocytes (64 uM for 100% hemolysis). Minimum bactericidal concentrations have also been tested against S.aureus and is four-fold higher (MBC=32 uM). The protein is Antimicrobial peptide AcrAP1 of Androctonus crassicauda (Arabian fat-tailed scorpion).